A 643-amino-acid chain; its full sequence is Phosphomethylpyrimidine synthase (643 aa).

Residues asparagine 248, methionine 277, tyrosine 306, histidine 342, 362 to 364 (SRG), 403 to 406 (DGLR), and glutamate 442 each bind substrate. Histidine 446 is a binding site for Zn(2+). Substrate is bound at residue tyrosine 469. Histidine 510 contacts Zn(2+). Cysteine 590, cysteine 593, and cysteine 598 together coordinate [4Fe-4S] cluster.

Belongs to the ThiC family. As to quaternary structure, homodimer. The cofactor is [4Fe-4S] cluster.

The enzyme catalyses 5-amino-1-(5-phospho-beta-D-ribosyl)imidazole + S-adenosyl-L-methionine = 4-amino-2-methyl-5-(phosphooxymethyl)pyrimidine + CO + 5'-deoxyadenosine + formate + L-methionine + 3 H(+). It participates in cofactor biosynthesis; thiamine diphosphate biosynthesis. Its function is as follows. Catalyzes the synthesis of the hydroxymethylpyrimidine phosphate (HMP-P) moiety of thiamine from aminoimidazole ribotide (AIR) in a radical S-adenosyl-L-methionine (SAM)-dependent reaction. In Burkholderia pseudomallei (strain 1106a), this protein is Phosphomethylpyrimidine synthase.